Consider the following 438-residue polypeptide: Xylose isomerase (438 aa).

Catalysis depends on residues H102 and D105. Mg(2+) contacts are provided by E233, E269, H272, D297, D308, D310, and D340.

This sequence belongs to the xylose isomerase family. In terms of assembly, homotetramer. It depends on Mg(2+) as a cofactor.

The protein localises to the cytoplasm. It carries out the reaction alpha-D-xylose = alpha-D-xylulofuranose. This Solibacter usitatus (strain Ellin6076) protein is Xylose isomerase.